The sequence spans 201 residues: 3-isopropylmalate dehydratase small subunit (201 aa).

This sequence belongs to the LeuD family. LeuD type 1 subfamily. In terms of assembly, heterodimer of LeuC and LeuD.

It carries out the reaction (2R,3S)-3-isopropylmalate = (2S)-2-isopropylmalate. It participates in amino-acid biosynthesis; L-leucine biosynthesis; L-leucine from 3-methyl-2-oxobutanoate: step 2/4. Functionally, catalyzes the isomerization between 2-isopropylmalate and 3-isopropylmalate, via the formation of 2-isopropylmaleate. This chain is 3-isopropylmalate dehydratase small subunit, found in Glaesserella parasuis serovar 5 (strain SH0165) (Haemophilus parasuis).